The chain runs to 283 residues: Protein FDD123 (283 aa).

Transmembrane regions (helical) follow at residues Trp24–Phe44, Leu52–Ala72, Tyr97–Leu117, Ile122–Val142, Trp148–His168, Ile185–Ala205, and Met217–Trp237.

It belongs to the archaeal/bacterial/fungal opsin family.

It is found in the membrane. The polypeptide is Protein FDD123 (FDD123) (Trametes versicolor (White-rot fungus)).